We begin with the raw amino-acid sequence, 40 residues long: MADTTGRIPLWLIGTVTGIIVIGLLGVFFYGSYSGLGSSL.

Residues 8–28 (IPLWLIGTVTGIIVIGLLGVF) traverse the membrane as a helical segment.

This sequence belongs to the PsbJ family. In terms of assembly, PSII is composed of 1 copy each of membrane proteins PsbA, PsbB, PsbC, PsbD, PsbE, PsbF, PsbH, PsbI, PsbJ, PsbK, PsbL, PsbM, PsbT, PsbX, PsbY, PsbZ, Psb30/Ycf12, at least 3 peripheral proteins of the oxygen-evolving complex and a large number of cofactors. It forms dimeric complexes.

The protein localises to the plastid. It is found in the chloroplast thylakoid membrane. In terms of biological role, one of the components of the core complex of photosystem II (PSII). PSII is a light-driven water:plastoquinone oxidoreductase that uses light energy to abstract electrons from H(2)O, generating O(2) and a proton gradient subsequently used for ATP formation. It consists of a core antenna complex that captures photons, and an electron transfer chain that converts photonic excitation into a charge separation. The sequence is that of Photosystem II reaction center protein J from Pinus thunbergii (Japanese black pine).